Reading from the N-terminus, the 111-residue chain is Nucleoid-associated protein Cpha266_1171 (111 aa).

It belongs to the YbaB/EbfC family. In terms of assembly, homodimer.

It localises to the cytoplasm. Its subcellular location is the nucleoid. Functionally, binds to DNA and alters its conformation. May be involved in regulation of gene expression, nucleoid organization and DNA protection. This Chlorobium phaeobacteroides (strain DSM 266 / SMG 266 / 2430) protein is Nucleoid-associated protein Cpha266_1171.